Here is a 165-residue protein sequence, read N- to C-terminus: Small ribosomal subunit protein uS5 (165 aa).

The region spanning 10-73 is the S5 DRBM domain; that stretch reads LNEKLIAVNR…EKARRNMVTV (64 aa).

The protein belongs to the universal ribosomal protein uS5 family. In terms of assembly, part of the 30S ribosomal subunit. Contacts proteins S4 and S8.

Its function is as follows. With S4 and S12 plays an important role in translational accuracy. Located at the back of the 30S subunit body where it stabilizes the conformation of the head with respect to the body. The polypeptide is Small ribosomal subunit protein uS5 (Photobacterium profundum (strain SS9)).